The following is a 375-amino-acid chain: Alpha-2,8-sialyltransferase 8B (375 aa).

Residues 1–6 (MQLQFR) are Cytoplasmic-facing. The chain crosses the membrane as a helical; Signal-anchor for type II membrane protein span at residues 7 to 23 (SWMLAALTLLVVFLIFA). The Lumenal portion of the chain corresponds to 24-375 (DISEIEEEIG…LTVGQCDGAT (352 aa)). 4 N-linked (GlcNAc...) asparagine glycosylation sites follow: Asn60, Asn72, Asn89, and Asn134. 2 disulfides stabilise this stretch: Cys157–Cys307 and Cys171–Cys371. Residues Asn162 and Asn185 each coordinate CMP-N-acetyl-beta-neuraminate. Asn219 and Asn234 each carry an N-linked (GlcNAc...) asparagine glycan. 6 residues coordinate CMP-N-acetyl-beta-neuraminate: Thr294, Thr295, Gly296, Trp316, Tyr329, and His330. Catalysis depends on His346, which acts as the Proton donor/acceptor.

This sequence belongs to the glycosyltransferase 29 family. Autopolysialylated. Autopolysialylation is not a prerequisite for the polysialylation acitity, but enhances the polysialylation acitity. As to expression, expressed only in newborn brain.

It localises to the golgi apparatus membrane. Its subcellular location is the secreted. It is found in the cell membrane. The enzyme catalyses [N-acetyl-alpha-D-neuraminosyl-(2-&gt;8)](n) + CMP-N-acetyl-beta-neuraminate = [N-acetyl-alpha-D-neuraminosyl-(2-&gt;8)](n+1) + CMP + H(+). It functions in the pathway protein modification; protein glycosylation. Functionally, catalyzes the transfer of a sialic acid from a CMP-linked sialic acid donor onto a terminal alpha-2,3-, alpha-2,6-, or alpha-2,8-linked sialic acid of an N-linked glycan acceptor through alpha-2,8-linkages. Therefore, participates in polysialic acid synthesis on various sialylated N-acetyllactosaminyl oligosaccharides (alpha-2,3-, alpha-2,6-, or alpha-2,8-linked sialic acid), including NCAM1, NCAM1 N-glycans, FETUB N-glycans, and to a lesser extent sialylparagloboside (SPG) and AHSG, which does not require the initial addition of an alpha 2,8-sialic acid. However, does not exhibit sialic acid-polymerase activity. Catalyzes polysialic acid synthesis in the hippocampal on NCAM1 and supports neurite outgrowth. ST8SIA2-mediated polysialylation influences on oligodendrocyte differentiation and may promote the integrity of myelin and axons. This Rattus norvegicus (Rat) protein is Alpha-2,8-sialyltransferase 8B.